A 214-amino-acid polypeptide reads, in one-letter code: 3-isopropylmalate dehydratase small subunit (214 aa).

The protein belongs to the LeuD family. LeuD type 1 subfamily. In terms of assembly, heterodimer of LeuC and LeuD.

It carries out the reaction (2R,3S)-3-isopropylmalate = (2S)-2-isopropylmalate. It functions in the pathway amino-acid biosynthesis; L-leucine biosynthesis; L-leucine from 3-methyl-2-oxobutanoate: step 2/4. Its function is as follows. Catalyzes the isomerization between 2-isopropylmalate and 3-isopropylmalate, via the formation of 2-isopropylmaleate. The protein is 3-isopropylmalate dehydratase small subunit of Methylobacillus flagellatus (strain ATCC 51484 / DSM 6875 / VKM B-1610 / KT).